The chain runs to 614 residues: WD repeat-containing protein 26 (614 aa).

Low complexity-rich tracts occupy residues 1-19 (MQAN…AGSG) and 34-44 (SNGVLSSNNGL). Positions 1–65 (MQANGAAAAA…PGGRKKKRLS (65 aa)) are disordered. The LisH domain occupies 67-99 (ADEDVIRLIGQHLHGLGLNQTVDLLMQESGCRL). The CTLH domain maps to 100–184 (EHPSATKFRN…EYLEDGKVLE (85 aa)). WD repeat units follow at residues 306–345 (EHCN…HQLK), 352–391 (GHAY…GELR), 397–437 (SHED…DSWE), 477–516 (QEDH…LVRK), 519–561 (GVTQ…PIAE), and 564–604 (GHTR…DNQE).

Forms homooligomers. Identified in the CTLH complex that contains at least MAEA, RMND5A (or alternatively its paralog RMND5B), GID8, WDR26, and RANBP9 and/or RANBP10. Interacts with DDB1-CUL4A/B E3 ligase complexes.

Its subcellular location is the cytoplasm. It is found in the nucleus. It localises to the mitochondrion. G-beta-like protein involved in cell signal transduction. Acts as a negative regulator in MAPK signaling pathway. Functions as a scaffolding protein to promote G beta:gamma-mediated PLCB2 plasma membrane translocation and subsequent activation in leukocytes. Core component of the CTLH E3 ubiquitin-protein ligase complex that mediates ubiquitination and subsequent proteasomal degradation of target proteins. Acts as a negative regulator of the canonical Wnt signaling pathway through preventing ubiquitination of beta-catenin CTNNB1 by the beta-catenin destruction complex, thus negatively regulating CTNNB1 degradation. Serves as a scaffold to coordinate PI3K/AKT pathway-driven cell growth and migration. Protects cells from oxidative stress-induced apoptosis via the down-regulation of AP-1 transcriptional activity as well as by inhibiting cytochrome c release from mitochondria. Also protects cells by promoting hypoxia-mediated autophagy and mitophagy. The sequence is that of WD repeat-containing protein 26 (wdr26) from Xenopus tropicalis (Western clawed frog).